Reading from the N-terminus, the 282-residue chain is Adenosylcobinamide-GDP ribazoletransferase (282 aa).

Helical transmembrane passes span 47–67 (GVGILVGVMAALVYGLIQALL), 72–92 (FTPLVAAVLSTAATVLLTGGF), 124–144 (AFGAMALMLALLGKTALLAML), 167–187 (AALLTGHVVSRGLPLLLIWLL), 208–228 (GSLLVAFIWSFVVLALAGLAL), and 231–251 (ISLIVACSFSLLALLWMGALF).

This sequence belongs to the CobS family. Mg(2+) serves as cofactor.

Its subcellular location is the cell inner membrane. It carries out the reaction alpha-ribazole + adenosylcob(III)inamide-GDP = adenosylcob(III)alamin + GMP + H(+). The enzyme catalyses alpha-ribazole 5'-phosphate + adenosylcob(III)inamide-GDP = adenosylcob(III)alamin 5'-phosphate + GMP + H(+). Its pathway is cofactor biosynthesis; adenosylcobalamin biosynthesis; adenosylcobalamin from cob(II)yrinate a,c-diamide: step 7/7. In terms of biological role, joins adenosylcobinamide-GDP and alpha-ribazole to generate adenosylcobalamin (Ado-cobalamin). Also synthesizes adenosylcobalamin 5'-phosphate from adenosylcobinamide-GDP and alpha-ribazole 5'-phosphate. This is Adenosylcobinamide-GDP ribazoletransferase from Polaromonas sp. (strain JS666 / ATCC BAA-500).